A 465-amino-acid chain; its full sequence is Transcriptional protein swt1 (465 aa).

The 121-residue stretch at 70–190 (GLFVLDTNFL…LLSDDKNLSI (121 aa)) folds into the PINc domain.

Belongs to the SWT1 family.

The protein localises to the cytoplasm. Its subcellular location is the nucleus. Functionally, involved in transcription. This chain is Transcriptional protein swt1, found in Schizosaccharomyces pombe (strain 972 / ATCC 24843) (Fission yeast).